Consider the following 390-residue polypeptide: Lipoyl synthase, mitochondrial (390 aa).

The transit peptide at 1–18 (MALYRAPKLQRSLLNRCL) directs the protein to the mitochondrion. Residues cysteine 99, cysteine 104, cysteine 110, cysteine 137, cysteine 141, cysteine 144, and serine 351 each contribute to the [4Fe-4S] cluster site. One can recognise a Radical SAM core domain in the interval 120-340 (AEGRSAATAT…KQVAEDLGFL (221 aa)).

Belongs to the radical SAM superfamily. Lipoyl synthase family. The cofactor is [4Fe-4S] cluster.

The protein resides in the mitochondrion. The catalysed reaction is [[Fe-S] cluster scaffold protein carrying a second [4Fe-4S](2+) cluster] + N(6)-octanoyl-L-lysyl-[protein] + 2 oxidized [2Fe-2S]-[ferredoxin] + 2 S-adenosyl-L-methionine + 4 H(+) = [[Fe-S] cluster scaffold protein] + N(6)-[(R)-dihydrolipoyl]-L-lysyl-[protein] + 4 Fe(3+) + 2 hydrogen sulfide + 2 5'-deoxyadenosine + 2 L-methionine + 2 reduced [2Fe-2S]-[ferredoxin]. Its pathway is protein modification; protein lipoylation via endogenous pathway; protein N(6)-(lipoyl)lysine from octanoyl-[acyl-carrier-protein]: step 2/2. In terms of biological role, catalyzes the radical-mediated insertion of two sulfur atoms into the C-6 and C-8 positions of the octanoyl moiety bound to the lipoyl domains of lipoate-dependent enzymes, thereby converting the octanoylated domains into lipoylated derivatives. The chain is Lipoyl synthase, mitochondrial from Coprinopsis cinerea (strain Okayama-7 / 130 / ATCC MYA-4618 / FGSC 9003) (Inky cap fungus).